Here is a 916-residue protein sequence, read N- to C-terminus: Calcium homeostasis endoplasmic reticulum protein (916 aa).

At Met-1 the chain carries N-acetylmethionine. An SURP motif repeat occupies 15–57 (VIDKLAQFVARNGPEFEKMTMEKQKDNPKFSFLFGGEFYSYYK). N6-acetyllysine is present on Lys-18. Residues 149-289 (ETQLDMNEFD…QLQSPALGLG (141 aa)) form the CID domain. 2 disordered regions span residues 336 to 549 (QQQQ…RFPP) and 601 to 635 (HPPW…PHIN). A compositionally biased stretch (pro residues) spans 354 to 374 (TPPPPAPPPAPAPAPAIPPTT). Over residues 480 to 501 (WNNQPDAAWNSQFEGPWNSQHE) the composition is skewed to polar residues. Residues 525–541 (PFPPHQQHPQFNQPPHP) are compositionally biased toward pro residues. Residue Tyr-714 is modified to Phosphotyrosine. The tract at residues 722-878 (RARRRKGQEK…DPIKGGDVRD (157 aa)) is disordered. A compositionally biased stretch (basic residues) spans 739–749 (SRSRSKSRGRS). The span at 750–766 (SSRSNSRSSKSSGSYSR) shows a compositional bias: low complexity. The span at 767 to 815 (SRSRSCSRSYSRSRSRSRSRSRSSRSRSRSQSRSRSKSYSPGRRRRSRS) shows a compositional bias: basic residues. Phosphoserine occurs at positions 813, 815, and 817. Thr-819 carries the post-translational modification Phosphothreonine. Ser-828 carries the phosphoserine modification. Positions 841–891 (EENKGHQMLVKMGWSGSGGLGAKEQGIQDPIKGGDVRDKWDQYKGVGVALD) constitute a G-patch domain. Lys-844 participates in a covalent cross-link: Glycyl lysine isopeptide (Lys-Gly) (interchain with G-Cter in SUMO2). 2 positions are modified to phosphoserine: Ser-855 and Ser-857. Residue Lys-872 forms a Glycyl lysine isopeptide (Lys-Gly) (interchain with G-Cter in SUMO2) linkage. Residue Lys-879 is modified to N6-acetyllysine. Ser-904 is subject to Phosphoserine.

In terms of tissue distribution, expressed in brain, placenta, lung, liver, kidney, pancreas, cardiac and skeletal muscle, and in cultured HEL and Dami cells.

The protein resides in the cytoplasm. Its subcellular location is the perinuclear region. It localises to the endoplasmic reticulum. Its function is as follows. Involved in calcium homeostasis, growth and proliferation. The sequence is that of Calcium homeostasis endoplasmic reticulum protein from Homo sapiens (Human).